We begin with the raw amino-acid sequence, 417 residues long: Type IV inositol polyphosphate 5-phosphatase 9 (417 aa).

2 catalytic regions span residues 258 to 273 (DRVI…ISLP) and 339 to 354 (KKRA…WYGN).

Belongs to the inositol polyphosphate 5-phosphatase family. In terms of tissue distribution, specifically expressed in roots.

It catalyses the reaction a 1,2-diacyl-sn-glycero-3-phospho-(1D-myo-inositol-4,5-bisphosphate) + H2O = a 1,2-diacyl-sn-glycero-3-phospho-(1D-myo-inositol 4-phosphate) + phosphate. The catalysed reaction is a 1,2-diacyl-sn-glycero-3-phospho-(1D-myo-inositol-3,4,5-trisphosphate) + H2O = a 1,2-diacyl-sn-glycero-3-phospho-(1D-myo-inositol-3,4-bisphosphate) + phosphate. Its function is as follows. Has phosphatase activity toward PtdIns(4,5)P2 and at a lower extent toward PtdIns(3,4,5)P3 but not toward Ins(1,4,5)P3. Functions in salt stress response by regulating reactive oxygen species (ROS) production, endocytosis, Ca(2+) influx and stress-responsive genes expression. This Arabidopsis thaliana (Mouse-ear cress) protein is Type IV inositol polyphosphate 5-phosphatase 9.